Reading from the N-terminus, the 307-residue chain is O-acetylserine dependent cystathionine beta-synthase (307 aa).

Position 44 is an N6-(pyridoxal phosphate)lysine (lysine 44). Pyridoxal 5'-phosphate contacts are provided by residues asparagine 74, glycine 178–threonine 182, and serine 265.

This sequence belongs to the cysteine synthase/cystathionine beta-synthase family. Requires pyridoxal 5'-phosphate as cofactor.

It carries out the reaction O-acetyl-L-serine + L-homocysteine = L,L-cystathionine + acetate + H(+). Functionally, catalyzes the conversion of O-acetylserine and homocysteine to cystathionine. This chain is O-acetylserine dependent cystathionine beta-synthase (mccA), found in Bacillus subtilis (strain 168).